Consider the following 351-residue polypeptide: Penicillolysin (351 aa).

Positions 1–19 are cleaved as a signal peptide; it reads MRFTTLSTAFLALAQNVYA. The propeptide occupies 20–174; the sequence is FPIESDLSAL…TKALKPLDRR (155 aa). Residues Asn52 and Asn181 are each glycosylated (N-linked (GlcNAc...) asparagine). Zn(2+) is bound at residue His302. Glu303 is a catalytic residue. The Zn(2+) site is built by His306 and Asp317.

This sequence belongs to the peptidase M35 family. Zn(2+) serves as cofactor.

The catalysed reaction is Preferential cleavage of bonds with hydrophobic residues in P1'. Also 3-Asn-|-Gln-4 and 8-Gly-|-Ser-9 bonds in insulin B chain.. This Penicillium citrinum protein is Penicillolysin (plnC).